A 355-amino-acid polypeptide reads, in one-letter code: Histidine biosynthesis bifunctional protein HisB (355 aa).

Residues 1–166 form a histidinol-phosphatase region; the sequence is MKQKILFIDR…DITKEIIKRN (166 aa). Residue aspartate 9 is the Nucleophile of the active site. Residues aspartate 9 and aspartate 11 each coordinate Mg(2+). Aspartate 11 serves as the catalytic Proton donor. The Zn(2+) site is built by cysteine 93, histidine 95, cysteine 101, and cysteine 103. Aspartate 130 serves as a coordination point for Mg(2+). The imidazoleglycerol-phosphate dehydratase stretch occupies residues 167–355; sequence RYREVIRETK…NTLPTSKGIL (189 aa).

The protein in the N-terminal section; belongs to the histidinol-phosphatase family. It in the C-terminal section; belongs to the imidazoleglycerol-phosphate dehydratase family. Requires Mg(2+) as cofactor. Zn(2+) serves as cofactor.

It localises to the cytoplasm. The enzyme catalyses D-erythro-1-(imidazol-4-yl)glycerol 3-phosphate = 3-(imidazol-4-yl)-2-oxopropyl phosphate + H2O. It carries out the reaction L-histidinol phosphate + H2O = L-histidinol + phosphate. It participates in amino-acid biosynthesis; L-histidine biosynthesis; L-histidine from 5-phospho-alpha-D-ribose 1-diphosphate: step 6/9. It functions in the pathway amino-acid biosynthesis; L-histidine biosynthesis; L-histidine from 5-phospho-alpha-D-ribose 1-diphosphate: step 8/9. This Buchnera aphidicola subsp. Schizaphis graminum (strain Sg) protein is Histidine biosynthesis bifunctional protein HisB.